The chain runs to 262 residues: Protein Pcal_0062 (262 aa).

It belongs to the CinA family.

This Pyrobaculum calidifontis (strain DSM 21063 / JCM 11548 / VA1) protein is Protein Pcal_0062.